A 109-amino-acid chain; its full sequence is Ribulose bisphosphate carboxylase small subunit (109 aa).

It belongs to the RuBisCO small chain family. Heterohexadecamer of 8 large and 8 small subunits.

The protein localises to the carboxysome. Its function is as follows. RuBisCO catalyzes two reactions: the carboxylation of D-ribulose 1,5-bisphosphate, the primary event in carbon dioxide fixation, as well as the oxidative fragmentation of the pentose substrate in the photorespiration process. Both reactions occur simultaneously and in competition at the same active site. Although the small subunit is not catalytic it is essential for maximal activity. In Prochlorothrix hollandica, this protein is Ribulose bisphosphate carboxylase small subunit.